Reading from the N-terminus, the 572-residue chain is Squalene monooxygenase (572 aa).

The Cytoplasmic segment spans residues methionine 1–aspartate 19. The interval methionine 1–lysine 98 is interaction with MARCHF6. An intramembrane segment occupies valine 20–valine 40. Residues leucine 41–histidine 572 are Cytoplasmic-facing. Residues glutamine 61 to leucine 72 form a required for degradation in response to high membrane cholesterol levels region. Residues threonine 116 to histidine 572 form a sufficient for enzyme activity region. FAD contacts are provided by residues valine 131–leucine 132, glutamate 151–arginine 152, arginine 159, arginine 232, valine 248, aspartate 406, and methionine 419. The interval proline 514 to histidine 572 is hydrophobic; mediates interaction with membranes.

The protein belongs to the squalene monooxygenase family. In terms of assembly, interacts (via N-terminal domain) with MARCHF6. Interacts with SMIM22; this interaction modulates lipid droplet formation. FAD serves as cofactor. Post-translationally, ubiquitinated by MARCHF6 in response to high cholesterol levels in intracellular membranes, leading to proteasomal degradation. As to expression, detected in liver.

It localises to the microsome membrane. The protein localises to the endoplasmic reticulum membrane. The catalysed reaction is squalene + reduced [NADPH--hemoprotein reductase] + O2 = (S)-2,3-epoxysqualene + oxidized [NADPH--hemoprotein reductase] + H2O + H(+). The protein operates within terpene metabolism; lanosterol biosynthesis; lanosterol from farnesyl diphosphate: step 2/3. Its function is as follows. Catalyzes the stereospecific oxidation of squalene to (S)-2,3-epoxysqualene, and is considered to be a rate-limiting enzyme in steroid biosynthesis. The sequence is that of Squalene monooxygenase (Sqle) from Mus musculus (Mouse).